A 735-amino-acid chain; its full sequence is Photosystem I P700 chlorophyll a apoprotein A2 (735 aa).

Transmembrane regions (helical) follow at residues 47 to 70 (IFAS…FHVA), 136 to 159 (LYNG…LHLQ), 176 to 200 (LNHH…HVAI), 274 to 292 (MAHH…GHMY), 331 to 354 (LHFQ…QHMY), 370 to 396 (AALY…IFFI), 418 to 440 (AIIS…LYVH), and 518 to 536 (FLVH…LILV). Residues Cys-560 and Cys-569 each coordinate [4Fe-4S] cluster. Helical transmembrane passes span 576-597 (AFYL…YWHW) and 644-666 (LSVW…MFLI). Chlorophyll a-binding residues include His-655, Met-663, and Tyr-671. Trp-672 lines the phylloquinone pocket. Residues 708-728 (LVGLVHFSVGYIFTYAAFLIA) traverse the membrane as a helical segment.

The protein belongs to the PsaA/PsaB family. In terms of assembly, the PsaA/B heterodimer binds the P700 chlorophyll special pair and subsequent electron acceptors. PSI consists of a core antenna complex that captures photons, and an electron transfer chain that converts photonic excitation into a charge separation. The eukaryotic PSI reaction center is composed of at least 11 subunits. P700 is a chlorophyll a/chlorophyll a' dimer, A0 is one or more chlorophyll a, A1 is one or both phylloquinones and FX is a shared 4Fe-4S iron-sulfur center. is required as a cofactor.

It is found in the plastid. It localises to the chloroplast thylakoid membrane. The enzyme catalyses reduced [plastocyanin] + hnu + oxidized [2Fe-2S]-[ferredoxin] = oxidized [plastocyanin] + reduced [2Fe-2S]-[ferredoxin]. PsaA and PsaB bind P700, the primary electron donor of photosystem I (PSI), as well as the electron acceptors A0, A1 and FX. PSI is a plastocyanin/cytochrome c6-ferredoxin oxidoreductase, converting photonic excitation into a charge separation, which transfers an electron from the donor P700 chlorophyll pair to the spectroscopically characterized acceptors A0, A1, FX, FA and FB in turn. Oxidized P700 is reduced on the lumenal side of the thylakoid membrane by plastocyanin or cytochrome c6. This chain is Photosystem I P700 chlorophyll a apoprotein A2, found in Stigeoclonium helveticum (Green alga).